Consider the following 59-residue polypeptide: Cortexin domain-containing 1 protein (59 aa).

The helical transmembrane segment at 17 to 37 threads the bilayer; the sequence is LTLACFVFLCLFLVVMIIRCA.

It is found in the membrane. The chain is Cortexin domain-containing 1 protein from Homo sapiens (Human).